A 312-amino-acid polypeptide reads, in one-letter code: NAD(P)(+)--arginine ADP-ribosyltransferase 1 (312 aa).

Positions 1–20 (MELLALRWVLLAGTLLSTSA) are cleaved as a signal peptide. Residues 21–31 (ASSALQEGDLG) constitute a propeptide that is removed on maturation. 2 cysteine pairs are disulfide-bonded: Cys51–Cys260 and Cys159–Cys208. Residues 71–256 (IAYAVTWRQA…IQLHSKGKMS (186 aa)) enclose the TR mART core domain. NAD(+) contacts are provided by Tyr108, Arg164, and Gln183. The active site involves Arg164. Ser186 is a catalytic residue. Ser217 serves as a coordination point for NAD(+). Glu224 is a catalytic residue. Positions 267-312 (GGQWGRGHQEVGLGLSPGLSLPVLPCRRRVWEGLGHREGDPIPAAV) are excised as a propeptide.

This sequence belongs to the Arg-specific ADP-ribosyltransferase family.

It localises to the secreted. The protein resides in the extracellular space. It catalyses the reaction L-arginyl-[protein] + NAD(+) = N(omega)-(ADP-D-ribosyl)-L-arginyl-[protein] + nicotinamide + H(+). This Gallus gallus (Chicken) protein is NAD(P)(+)--arginine ADP-ribosyltransferase 1.